The chain runs to 320 residues: MRISTLDRRDMKHIHIIDSHTGGEPTRVVVSGFPALGGGTMAERLAVLAREHDRYRAACILEPRGSDVLVGALLCEPVSAGAAAGVIFFNNAGYLGMCGHGTIGLVRTLHHMGRIGPGVHRIETPVGDVEATLHDDLSVSVRNVLAYRHAKDVVVDVPGHGAVTGDVAWGGNWFFLVSDHGQRVAGENVAALAAYASAVRAALERAGVTGRDGAPIDHIELFADDPEYDSRSFVLCPGHAYDRSPCGTGTSAKLACLAADGKLAAGVTWRQASVIGSVFSASYAAAEGGVVPTIRGSAHLSAEATLVIEDDDPFGWGIAS.

The Proton acceptor role is filled by cysteine 98. Substrate-binding positions include 99 to 100 (GH), histidine 218, and aspartate 242. Cysteine 246 functions as the Proton donor in the catalytic mechanism. Substrate is bound at residue 247–248 (GT).

It belongs to the proline racemase family.

The catalysed reaction is trans-4-hydroxy-L-proline = cis-4-hydroxy-D-proline. Functionally, catalyzes the epimerization of trans-4-hydroxy-L-proline (t4LHyp) to cis-4-hydroxy-D-proline (c4DHyp). Is likely involved in a degradation pathway that converts t4LHyp to alpha-ketoglutarate. Displays no proline racemase activity. The sequence is that of 4-hydroxyproline 2-epimerase from Burkholderia pseudomallei (strain 1710b).